The following is a 268-amino-acid chain: tRNA (guanine-N(1)-)-methyltransferase (268 aa).

S-adenosyl-L-methionine-binding positions include G110 and 129–134; that span reads IGDFVM. Positions 246–268 are disordered; it reads WGAPPAPVKRHRKRRPETTESAS.

Belongs to the RNA methyltransferase TrmD family. As to quaternary structure, homodimer.

The protein resides in the cytoplasm. The enzyme catalyses guanosine(37) in tRNA + S-adenosyl-L-methionine = N(1)-methylguanosine(37) in tRNA + S-adenosyl-L-homocysteine + H(+). Its function is as follows. Specifically methylates guanosine-37 in various tRNAs. This Deinococcus deserti (strain DSM 17065 / CIP 109153 / LMG 22923 / VCD115) protein is tRNA (guanine-N(1)-)-methyltransferase.